The primary structure comprises 417 residues: Succinate--CoA ligase [ADP-forming] subunit beta, mitochondrial (417 aa).

The N-terminal 24 residues, 1–24 (MLRKLANQSLSVAGKWQQQQLRRL), are a transit peptide targeting the mitochondrion. In terms of domain architecture, ATP-grasp spans 32–275 (AELMSKYGIN…SSQEDPREVA (244 aa)). ATP is bound by residues lysine 71, 78–80 (GRG), and glutamate 138. Mg(2+) is bound by residues asparagine 230 and aspartate 244. Residues asparagine 295 and 352 to 354 (GIM) each bind substrate.

Belongs to the succinate/malate CoA ligase beta subunit family. As to quaternary structure, heterodimer of an alpha and a beta subunit. Mg(2+) serves as cofactor. Expressed in roots, stems, flowers, leaves and fruits.

It is found in the mitochondrion. It carries out the reaction succinate + ATP + CoA = succinyl-CoA + ADP + phosphate. The protein operates within carbohydrate metabolism; tricarboxylic acid cycle; succinate from succinyl-CoA (ligase route): step 1/1. In terms of biological role, succinyl-CoA synthetase functions in the citric acid cycle (TCA), coupling the hydrolysis of succinyl-CoA to the synthesis of ATP and thus represents the only step of substrate-level phosphorylation in the TCA. The beta subunit provides nucleotide specificity of the enzyme and binds the substrate succinate, while the binding sites for coenzyme A and phosphate are found in the alpha subunit. In Solanum lycopersicum (Tomato), this protein is Succinate--CoA ligase [ADP-forming] subunit beta, mitochondrial.